The sequence spans 309 residues: uncharacterized protein (309 aa).

6 helical membrane passes run Ile-28–Pro-48, Met-73–Trp-93, Leu-113–Ile-133, Ile-157–Ser-177, Phe-220–Phe-240, and Ile-259–Leu-279.

Its subcellular location is the cell membrane. This is an uncharacterized protein from Bacillus subtilis (strain 168).